The following is a 571-amino-acid chain: MDEIDNIILHSLRQIGCTLDDEVTSLDEFSPTLLVQVVSKCITLIDSSLDLPRTLPPGMAQRFTATASLAEACRTIGYRRDIGYQTFLYSNVAEVRRVLMFLIERLPKESADKAAGTGQPLDVTTELESRICASLQSQLQAPWMPEFCRTAAGPSSSQIAFRRFVPRKLNIPFVTQGDIAAEVKEFWSRQASLDTLDEDSFIPSVIAANDGALKASGGAIDEVDRIKVCSPVDRLQRFYTSSEQKSSVVPVGKVAVEEKLDALAIVEAARPGKTPLESLQEEIDQIRVEIERAVGEGTGLEGERMEVVELCEVQRAAVGKLKDEKKIKERTHILLEDPEVNVRKLQGIIGAGGERMKKLQDQWDVHRIPLEQELEGYRVKHSDKLSQSQQIVDQIEATRHKSEEVMMDLQTKSAMHARLQKELEKLNRTVSRTAYTSRILEIVGNIRKQKTDIDKILQDTRTLQKEINTITGQLDRQFTVTDDLIFRNAKKDEHAKKAYKLLVTLHSDCAELMALVQETGAVKREIRDLEDQIETERSRNTAANLAQICRDLAEMQSESQRLEESLRAHLR.

Coiled-coil stretches lie at residues 406 to 434 (MMDL…SRTA) and 509 to 571 (CAEL…AHLR).

The protein belongs to the CCDC22 family.

The sequence is that of Coiled-coil domain-containing protein 22 homolog from Culex quinquefasciatus (Southern house mosquito).